The sequence spans 88 residues: Small ribosomal subunit protein bS20 (88 aa).

The segment at 1-25 is disordered; the sequence is MANSAQARKRARQAVAQNAHNSSLR.

It belongs to the bacterial ribosomal protein bS20 family.

Binds directly to 16S ribosomal RNA. This chain is Small ribosomal subunit protein bS20, found in Cupriavidus pinatubonensis (strain JMP 134 / LMG 1197) (Cupriavidus necator (strain JMP 134)).